Consider the following 135-residue polypeptide: Protein PsiE homolog (135 aa).

4 consecutive transmembrane segments (helical) span residues 20–40 (VGLIMLAAILVVFLVKETIHL), 54–74 (YMLIEGIVIYFLYFEFIALIV), 82–102 (HFPLRYFIYIGITAIIRLIIV), and 107–127 (PIDTLIYSGSILVLVVTLYLA).

Belongs to the PsiE family.

It localises to the cell inner membrane. The polypeptide is Protein PsiE homolog (Yersinia pseudotuberculosis serotype IB (strain PB1/+)).